A 239-amino-acid chain; its full sequence is MSLMKEMLSAGVHFGHKKAFWNPQMKEYIFGINHGVHIINLEKTVPLFQDAVNFVGKTVANGGKILFVGTKRQAQDIVEAEAKRCGMPFVSHRWLGGMLTNYKTVRQSIKRLAQLEKMREDGTLESLTKKEMLQNIRTIEKLEKVLGGIKEMGGLPDAIVVIDSNKEHIAIQEAQKLGIKVVAIVDTNSNPEGIDYIIPGNDDAVKSISFYMKKFADAVIDAQGLDRAVEAKADEAAQA.

It belongs to the universal ribosomal protein uS2 family.

The protein is Small ribosomal subunit protein uS2 of Francisella tularensis subsp. tularensis (strain WY96-3418).